Reading from the N-terminus, the 196-residue chain is Nodulation protein A (196 aa).

It belongs to the NodA family.

It is found in the cytoplasm. N-acyltransferase required for nodulation. Acts in the production of a small, heat-stable compound (Nod) that stimulates mitosis in various plant protoplasts. The sequence is that of Nodulation protein A from Mesorhizobium plurifarium.